Consider the following 152-residue polypeptide: HTH-type transcriptional regulator SlrR (152 aa).

The 56-residue stretch at 6–61 folds into the HTH cro/C1-type domain; sequence IRLYRKRKGYSINQLAVESGVSKSYLSKIERGVHTNPSVQFLKKVSATLEVELTEL. Residues 17 to 36 constitute a DNA-binding region (H-T-H motif); that stretch reads INQLAVESGVSKSYLSKIER. The region spanning 113 to 151 is the Sin domain; that stretch reads YRNRKLTESNIEEWKALMAEAREIGLSVHEVKSFLKTKG.

In terms of assembly, component of the SlrR/SlrA complex.

Represses sigma(D)-dependent flagellar genes and activate the eps and yqxM operons. Repressor activity is regulated by SlrA. Controls the initiation of biofilm formation. The protein is HTH-type transcriptional regulator SlrR (slrR) of Bacillus subtilis (strain 168).